The chain runs to 415 residues: tRNA(Ile)-lysidine synthase (415 aa).

Position 36-41 (36-41 (SGGRDS)) interacts with ATP.

Belongs to the tRNA(Ile)-lysidine synthase family.

Its subcellular location is the cytoplasm. It carries out the reaction cytidine(34) in tRNA(Ile2) + L-lysine + ATP = lysidine(34) in tRNA(Ile2) + AMP + diphosphate + H(+). In terms of biological role, ligates lysine onto the cytidine present at position 34 of the AUA codon-specific tRNA(Ile) that contains the anticodon CAU, in an ATP-dependent manner. Cytidine is converted to lysidine, thus changing the amino acid specificity of the tRNA from methionine to isoleucine. The sequence is that of tRNA(Ile)-lysidine synthase from Tropheryma whipplei (strain Twist) (Whipple's bacillus).